Here is a 333-residue protein sequence, read N- to C-terminus: Testin-2 (333 aa).

Residues 1-17 (MIAVLFLAILCLEVDST) form the signal peptide. 3 disulfide bridges follow: cysteine 135/cysteine 178, cysteine 169/cysteine 211, and cysteine 269/cysteine 322. Asparagine 173 carries N-linked (GlcNAc...) asparagine glycosylation. Catalysis depends on residues histidine 276 and asparagine 300.

It belongs to the peptidase C1 family. Sertoli cells.

The protein localises to the secreted. The polypeptide is Testin-2 (Testin) (Rattus norvegicus (Rat)).